Here is a 474-residue protein sequence, read N- to C-terminus: Tumor necrosis factor receptor superfamily member 1B (474 aa).

The first 22 residues, 1–22, serve as a signal peptide directing secretion; the sequence is MAPAALWVALVFELQLWATGHT. At 23–258 the chain is on the extracellular side; the sequence is VPAQVVLTPY…PIIEQSTKGG (236 aa). Threonine 30 carries an O-linked (GalNAc...) threonine glycan. TNFR-Cys repeat units lie at residues 39-77, 78-119, 120-164, and 165-203; these read ECQISQEYYDRKAQMCCAKCPPGQYVKHFCNKTSDTVCA, DCEA…NRVC, ACEA…VLCK, and ACAPGTFSDTTSSTDVCRPHRICSILAIPGNASTDAVCA. 10 disulfides stabilise this stretch: cysteine 40–cysteine 54, cysteine 55–cysteine 68, cysteine 58–cysteine 76, cysteine 79–cysteine 94, cysteine 97–cysteine 111, cysteine 101–cysteine 119, cysteine 121–cysteine 127, cysteine 136–cysteine 145, cysteine 139–cysteine 163, and cysteine 166–cysteine 181. Residue asparagine 69 is glycosylated (N-linked (GlcNAc...) asparagine). Asparagine 195 carries an N-linked (GlcNAc...) asparagine glycan. O-linked (GalNAc...) threonine glycosylation is found at threonine 208 and threonine 224. A disordered region spans residues 220 to 243; that stretch reads QPEPTRSQPLDQEPGPSQTPSILT. Residues 259-288 traverse the membrane as a helical segment; it reads ISLPIGLIVGVTSLGLLMLGLVNCIILVQR. Over 289-474 the chain is Cytoplasmic; the sequence is KKKPSCLQRD…WFDQIAVKVA (186 aa). 3 disordered regions span residues 295-314, 321-378, and 397-463; these read LQRDAKVPHVPDEKSQDAVG, LTTA…GSHG, and SQCS…PSQA. A compositionally biased stretch (basic and acidic residues) spans 297–310; the sequence is RDAKVPHVPDEKSQ. Low complexity-rich tracts occupy residues 324–338 and 363–378; these read APSSSSSSLESSASA and ARASSRISDSSHGSHG. Position 331 is a phosphoserine (serine 331). The segment covering 429–442 has biased composition (polar residues); that stretch reads ECPSQSPCETTETL.

As to quaternary structure, binds to TRAF2. Interacts with BMX. Interacts (activated form) with XPNPEP3.

It is found in the membrane. Functionally, receptor with high affinity for TNFSF2/TNF-alpha and approximately 5-fold lower affinity for homotrimeric TNFSF1/lymphotoxin-alpha. The TRAF1/TRAF2 complex recruits the apoptotic suppressors BIRC2 and BIRC3 to TNFRSF1B/TNFR2. In Mus musculus (Mouse), this protein is Tumor necrosis factor receptor superfamily member 1B (Tnfrsf1b).